A 404-amino-acid polypeptide reads, in one-letter code: Formate-dependent phosphoribosylglycinamide formyltransferase (404 aa).

N(1)-(5-phospho-beta-D-ribosyl)glycinamide-binding positions include 27–28 and Glu-87; that span reads EL. Residues Arg-120, Lys-162, 167-172, 202-205, and Glu-210 contribute to the ATP site; these read SSGKGQ and EGFI. One can recognise an ATP-grasp domain in the interval 125–320; it reads RLAAETLGLP…EFELHARALL (196 aa). Positions 279 and 291 each coordinate Mg(2+). Residues Asp-298, Lys-367, and 374–375 contribute to the N(1)-(5-phospho-beta-D-ribosyl)glycinamide site; that span reads RR.

It belongs to the PurK/PurT family. Homodimer.

It carries out the reaction N(1)-(5-phospho-beta-D-ribosyl)glycinamide + formate + ATP = N(2)-formyl-N(1)-(5-phospho-beta-D-ribosyl)glycinamide + ADP + phosphate + H(+). It participates in purine metabolism; IMP biosynthesis via de novo pathway; N(2)-formyl-N(1)-(5-phospho-D-ribosyl)glycinamide from N(1)-(5-phospho-D-ribosyl)glycinamide (formate route): step 1/1. In terms of biological role, involved in the de novo purine biosynthesis. Catalyzes the transfer of formate to 5-phospho-ribosyl-glycinamide (GAR), producing 5-phospho-ribosyl-N-formylglycinamide (FGAR). Formate is provided by PurU via hydrolysis of 10-formyl-tetrahydrofolate. This chain is Formate-dependent phosphoribosylglycinamide formyltransferase, found in Bordetella pertussis (strain Tohama I / ATCC BAA-589 / NCTC 13251).